A 163-amino-acid chain; its full sequence is Troponin C (163 aa).

S1 is modified (N-acetylserine). EF-hand domains follow at residues 14 to 49 (EQIS…LGMS), 50 to 85 (ISRE…AMQD), 90 to 125 (IPDD…CAGD), and 127 to 162 (LTDD…LKVR). K20 is modified (N6,N6-dimethyllysine; alternate). K20 is modified (N6-methyllysine; alternate). 13 residues coordinate Ca(2+): D27, D29, D33, E38, D63, D65, S67, T69, E74, D103, N105, D107, and E114.

This sequence belongs to the troponin C family.

Its function is as follows. Troponin is the central regulatory protein of striated muscle contraction. Tn consists of three components: Tn-I which is the inhibitor of actomyosin ATPase, Tn-T which contains the binding site for tropomyosin and Tn-C. The binding of calcium to Tn-C abolishes the inhibitory action of Tn on actin filaments. The sequence is that of Troponin C from Branchiostoma lanceolatum (Common lancelet).